Consider the following 309-residue polypeptide: Methionyl-tRNA formyltransferase (309 aa).

109-112 serves as a coordination point for (6S)-5,6,7,8-tetrahydrofolate; the sequence is SLLP.

Belongs to the Fmt family.

The catalysed reaction is L-methionyl-tRNA(fMet) + (6R)-10-formyltetrahydrofolate = N-formyl-L-methionyl-tRNA(fMet) + (6S)-5,6,7,8-tetrahydrofolate + H(+). Functionally, attaches a formyl group to the free amino group of methionyl-tRNA(fMet). The formyl group appears to play a dual role in the initiator identity of N-formylmethionyl-tRNA by promoting its recognition by IF2 and preventing the misappropriation of this tRNA by the elongation apparatus. This chain is Methionyl-tRNA formyltransferase, found in Clostridium botulinum (strain Alaska E43 / Type E3).